The following is a 194-amino-acid chain: Imidazoleglycerol-phosphate dehydratase (194 aa).

It belongs to the imidazoleglycerol-phosphate dehydratase family.

It localises to the cytoplasm. The catalysed reaction is D-erythro-1-(imidazol-4-yl)glycerol 3-phosphate = 3-(imidazol-4-yl)-2-oxopropyl phosphate + H2O. Its pathway is amino-acid biosynthesis; L-histidine biosynthesis; L-histidine from 5-phospho-alpha-D-ribose 1-diphosphate: step 6/9. This Listeria innocua serovar 6a (strain ATCC BAA-680 / CLIP 11262) protein is Imidazoleglycerol-phosphate dehydratase.